Reading from the N-terminus, the 316-residue chain is Aquaglyceroporin-2 (316 aa).

The segment at 1 to 31 (MADERGPINKSGPSSTYGATENNGESGGTRG) is disordered. At 1-59 (MADERGPINKSGPSSTYGATENNGESGGTRGAPATEDVIVIQDSGWYYIKFRFKEPFAE) the chain is on the cytoplasmic side. A compositionally biased stretch (polar residues) spans 11 to 24 (SGPSSTYGATENNG). A helical membrane pass occupies residues 60–80 (FLGTFILVAFGVGAIAQTVLS). The Extracellular portion of the chain corresponds to 81-86 (KGATGN). A helical membrane pass occupies residues 87-107 (WITIALGFGLGLALGIAVSGH). Over 108-131 (YSGGHLNPAVTITLAIYRKFPWVK) the chain is Cytoplasmic. The NPA 1 signature appears at 114-116 (NPA). The helical transmembrane segment at 132-152 (VPVYITAQVLGAFVAAAVIYL) threads the bilayer. Residues 153–187 (NYLPAIYNFAGDKRDVIGANATAGIFATYPQPFMS) lie on the Extracellular side of the membrane. N-linked (GlcNAc...) asparagine glycosylation is present at Asn-172. A helical membrane pass occupies residues 188–208 (IGGAFFSEALGTFFLLFVILA). Over 209–219 (MTDERNVPTTR) the chain is Cytoplasmic. The chain crosses the membrane as a helical span at residues 220-240 (IVAPITIGLTLTAIAISLGFE). Residues 241-271 (TGFSLNAARDFGPRLFTFFIGYGVEVFTAYK) lie on the Extracellular side of the membrane. The NPA 2 signature appears at 246–248 (NAA). Residues 272–292 (FYFWIPLVAPIVGGLVAGFVY) form a helical membrane-spanning segment. The Cytoplasmic segment spans residues 293-316 (DSLLYWGEKSFLNKNVHHEHRAVA).

This sequence belongs to the MIP/aquaporin (TC 1.A.8) family.

Its subcellular location is the cell membrane. It localises to the membrane. It carries out the reaction H2O(in) = H2O(out). The catalysed reaction is glycerol(in) = glycerol(out). Polyethylene glycol (PEG) stimulates whereas glycerol inhibits the aquaporin activity. In terms of biological role, water channel required to facilitate the transport of water across membranes. Stimulates plant drought tolerance by facilitating the transport of water from the arbuscular mycorrhiza fungus to host plants. The polypeptide is Aquaglyceroporin-2 (Rhizophagus irregularis (Arbuscular mycorrhizal fungus)).